A 52-amino-acid polypeptide reads, in one-letter code: Lantibiotic epidermin (52 aa).

The propeptide occupies 1-30; that stretch reads MEAVKEKNDLFNLDVKVNAKESNDSGAEPR. The lanthionine (Ser-Cys) cross-link spans 33 to 37; sequence SKFIC. Residues 38–41 constitute a cross-link (beta-methyllanthionine (Thr-Cys)); sequence TPGC. Thr44 is modified ((Z)-2,3-didehydrobutyrine). The lanthionine (Ser-Cys) cross-link spans 46 to 51; sequence SFNSYC. The S-(2-aminovinyl)-D-cysteine (Ser-Cys) cross-link spans 49 to 52; it reads SYCC.

Belongs to the type A lantibiotic family. Maturation of lantibiotics involves the enzymatic conversion of Thr, and Ser into dehydrated AA and the formation of thioether bonds with cysteine. The C-terminal lanthionine undergoes decarboxylation. This is followed by membrane translocation and cleavage of the modified precursor. Post-translationally, the 2,3-didehydrobutyrine is determined to be the Z-isomer.

Its function is as follows. Lanthionine-containing peptide antibiotic (lantibiotic) active on Gram-positive bacteria. The bactericidal activity of lantibiotics is based on depolarization of energized bacterial cytoplasmic membranes, initiated by the formation of aqueous transmembrane pores. This is Lantibiotic epidermin (epiA) from Staphylococcus epidermidis.